Reading from the N-terminus, the 203-residue chain is Hydra actinoporin-like toxin 2 (203 aa).

Residues 1–21 form the signal peptide; that stretch reads MLSYLCFGCFLVSASLEIACG. The Cell attachment site motif lies at 175 to 177; the sequence is RGG.

Belongs to the actinoporin family. HALT subfamily. In terms of assembly, octamer or nonamer in membranes. Monomer in the soluble state. In vitro, interacts with folate receptor alpha (of target organism). In terms of tissue distribution, strongly expressed in the gland and mucous cells in the endoderm.

It localises to the nematocyst. The protein resides in the secreted. Its subcellular location is the target cell membrane. Its function is as follows. Pore-forming protein that forms hydrophilic pores and causes cytolysis. Compared to equinatoxin-2 (AC P61914), it reveals lower cytolysis activity (5-12-fold difference, tested on erythrocytes), a larger pore size (probably 2-3 nm) and different affinity to membrane lipids (100-fold lower affinity to sphingomyelin). Binds to sulfatides (SFT). Shows cytolytic activity on HeLa cells, with a different potency than its paralogs (from most potent to less potent: HALT-4&gt;HALT-6~HALT-1&gt;HALT-3&gt;HALT-7&gt;HALT-2). Pore formation is a multi-step process that involves specific recognition of membrane lipid by a protein aromatic residues rich region, firm binding to the membrane (mainly driven by hydrophobic interactions) accompanied by the transfer of the N-terminal region to the lipid-water interface and finally pore formation after oligomerization of monomers. In vitro, binds to the folate receptor alpha (FOLR1), a GPI-anchored membrane protein that plays a major role in the uptake of folate/folic acid into cells via endocytosis, suggesting a possible involvement of this receptor in the mechanism of HALT-1-induced cell lysis. In vivo, does not cause visible paralysis in larvae of the blowfly Sarcophaga faculata, the most common arthropod prey of Hydra. In Hydra vulgaris (Hydra), this protein is Hydra actinoporin-like toxin 2.